A 164-amino-acid polypeptide reads, in one-letter code: Phosphopantetheine adenylyltransferase (164 aa).

Substrate is bound at residue Ser9. Residues 9–10 (SF) and His17 each bind ATP. Residues Lys41, Val78, and Arg92 each contribute to the substrate site. ATP is bound by residues 93-95 (GLR), Glu103, and 128-134 (SRPITAT).

This sequence belongs to the bacterial CoaD family. As to quaternary structure, homohexamer. Mg(2+) serves as cofactor.

It is found in the cytoplasm. It catalyses the reaction (R)-4'-phosphopantetheine + ATP + H(+) = 3'-dephospho-CoA + diphosphate. Its pathway is cofactor biosynthesis; coenzyme A biosynthesis; CoA from (R)-pantothenate: step 4/5. Reversibly transfers an adenylyl group from ATP to 4'-phosphopantetheine, yielding dephospho-CoA (dPCoA) and pyrophosphate. The sequence is that of Phosphopantetheine adenylyltransferase from Rhizobium etli (strain ATCC 51251 / DSM 11541 / JCM 21823 / NBRC 15573 / CFN 42).